The chain runs to 538 residues: Phosphoenolpyruvate carboxykinase (ATP) (538 aa).

Substrate is bound by residues Arg61, Tyr195, and Lys201. ATP contacts are provided by residues Lys201, His220, and 236 to 244; that span reads GLSGTGKTT. Positions 201 and 220 each coordinate Mn(2+). Asp257 serves as a coordination point for Mn(2+). Glu285, Arg323, and Thr449 together coordinate ATP. Arg323 is a substrate binding site.

The protein belongs to the phosphoenolpyruvate carboxykinase (ATP) family. Requires Mn(2+) as cofactor.

The protein resides in the cytoplasm. The catalysed reaction is oxaloacetate + ATP = phosphoenolpyruvate + ADP + CO2. Its pathway is carbohydrate biosynthesis; gluconeogenesis. In terms of biological role, involved in the gluconeogenesis. Catalyzes the conversion of oxaloacetate (OAA) to phosphoenolpyruvate (PEP) through direct phosphoryl transfer between the nucleoside triphosphate and OAA. This is Phosphoenolpyruvate carboxykinase (ATP) from Bradyrhizobium diazoefficiens (strain JCM 10833 / BCRC 13528 / IAM 13628 / NBRC 14792 / USDA 110).